The following is a 541-amino-acid chain: Tetratricopeptide repeat protein 8 (541 aa).

The stretch at 14-47 (YFRRRKFQLCADLCTQMLEKSPYDQEPDPELPVH) is one TPR 1 repeat. The segment at 118–137 (PITGFLRPSTQSGRPGTMEQ) is disordered. 7 TPR repeats span residues 251 to 284 (WWWK…QEMV), 285 to 317 (DTFL…FPGE), 318 to 351 (VTLL…DNTH), 352 to 385 (VEAI…GIYN), 386 to 419 (GQLF…AENE), 423 to 456 (ADVW…NNNH), and 457 to 490 (AEAY…APHM).

As to quaternary structure, part of BBSome complex, that contains BBS1, BBS2, BBS4, BBS5, BBS7, BBS8/TTC8, BBS9 and BBIP10. Interacts with PCM1. Interacts with CCDC28B. Interacts with PKD1. In terms of tissue distribution, widely expressed.

It is found in the cytoplasm. The protein resides in the cytoskeleton. Its subcellular location is the microtubule organizing center. The protein localises to the centrosome. It localises to the cell projection. It is found in the cilium membrane. The protein resides in the centriolar satellite. Its subcellular location is the cilium. Functionally, the BBSome complex is thought to function as a coat complex required for sorting of specific membrane proteins to the primary cilia. The BBSome complex is required for ciliogenesis but is dispensable for centriolar satellite function. This ciliogenic function is mediated in part by the Rab8 GDP/GTP exchange factor, which localizes to the basal body and contacts the BBSome. Rab8(GTP) enters the primary cilium and promotes extension of the ciliary membrane. Firstly the BBSome associates with the ciliary membrane and binds to RAB3IP/Rabin8, the guanosyl exchange factor (GEF) for Rab8 and then the Rab8-GTP localizes to the cilium and promotes docking and fusion of carrier vesicles to the base of the ciliary membrane. The BBSome complex, together with the LTZL1, controls SMO ciliary trafficking and contributes to the sonic hedgehog (SHH) pathway regulation. Required for proper BBSome complex assembly and its ciliary localization. The chain is Tetratricopeptide repeat protein 8 (TTC8) from Homo sapiens (Human).